Consider the following 130-residue polypeptide: 3-aminoacrylate deaminase RutC (130 aa).

It belongs to the RutC family.

The enzyme catalyses (Z)-3-aminoacrylate + H2O + H(+) = 3-oxopropanoate + NH4(+). Involved in pyrimidine catabolism. Catalyzes the deamination of 3-aminoacrylate to malonic semialdehyde, a reaction that can also occur spontaneously. RutC may facilitate the reaction and modulate the metabolic fitness, rather than catalyzing essential functions. The chain is 3-aminoacrylate deaminase RutC from Klebsiella variicola (strain At-22).